A 477-amino-acid polypeptide reads, in one-letter code: Endogenous retrovirus group V member 1 Env polyprotein (477 aa).

The N-terminal stretch at 1-21 (MTEKFLFLYLSLLPMPLLSQA) is a signal peptide. The Extracellular portion of the chain corresponds to 22–321 (QWNENSLVSF…NTTQPRQKRA (300 aa)). Asparagine 68 carries an N-linked (GlcNAc...) asparagine glycan. Residues 322 to 342 (LGLILAGMGAAIGMIAPWGGF) form a helical membrane-spanning segment. The Cytoplasmic segment spans residues 343–477 (TYHDVTLRNL…LLSPLWPLSL (135 aa)).

It belongs to the gamma type-C retroviral envelope protein family. As to expression, expressed in placenta.

The protein resides in the membrane. The protein is Endogenous retrovirus group V member 1 Env polyprotein (ERVV-1) of Homo sapiens (Human).